Here is a 413-residue protein sequence, read N- to C-terminus: MPSSISWGLLLLAGLSCLVAGSLAEDAQETGASKHDQEHPASHRIAPNLAEFALSLYRVLAHESNTTNIFFSPVSIAMALASLSLGTKADTHTQIMEGLGFNLTETAESDIHQGFQHLLQTLNKPNSQLQLTTGNGLFIDHNLKLLDKFLQDVKNLYHSEAFSTDFTNTEEAKKQINTYVEKGTQGKIVDLVKDLNRDSVLALVNYIFFKGKWEKPFEVDHTKEEDFHVDQVTTVRVPMMNRMGMFEVHYCSTLASWVLQMDYLGNATAIFLLPDEGKLQHLEDTITKEILAKFLKNRESSSVNLHFPKLNISGTMDLKPVLTRLGITNVFSYKADLSGITEDDPLRVSQALHKAVLTIDERGTEAAGATFLEMMPMSLPPEVKFDKPFLVVIIEHSTKSPLFVGKVVNPTLH.

An N-terminal signal peptide occupies residues 1–24 (MPSSISWGLLLLAGLSCLVAGSLA). 3 N-linked (GlcNAc...) asparagine glycosylation sites follow: asparagine 65, asparagine 102, and asparagine 266. An RCL region spans residues 368–387 (GATFLEMMPMSLPPEVKFDK).

Belongs to the serpin family.

It is found in the secreted. Inhibitor of serine proteases. Its primary target is elastase, but it also has a moderate affinity for plasmin and thrombin. The polypeptide is Alpha-1-antitrypsin-like protein GS55-MS (Ictidomys tridecemlineatus (Thirteen-lined ground squirrel)).